A 125-amino-acid chain; its full sequence is Ribonuclease P protein component 1 (125 aa).

The segment covering 1 to 13 (MRRNGKEGKDRAP) has biased composition (basic and acidic residues). A disordered region spans residues 1–24 (MRRNGKEGKDRAPGRPQRKGQEVA).

The protein belongs to the eukaryotic/archaeal RNase P protein component 1 family. Consists of a catalytic RNA component and at least 4-5 protein subunits.

It localises to the cytoplasm. The enzyme catalyses Endonucleolytic cleavage of RNA, removing 5'-extranucleotides from tRNA precursor.. Part of ribonuclease P, a protein complex that generates mature tRNA molecules by cleaving their 5'-ends. The polypeptide is Ribonuclease P protein component 1 (Thermococcus onnurineus (strain NA1)).